A 411-amino-acid polypeptide reads, in one-letter code: Dual-specificity RNA methyltransferase RlmN (411 aa).

Catalysis depends on Glu-125, which acts as the Proton acceptor. The Radical SAM core domain occupies 131-380 (EEGRGTLCIS…IRTPRGRDIL (250 aa)). A disulfide bond links Cys-138 and Cys-383. [4Fe-4S] cluster is bound by residues Cys-145, Cys-149, and Cys-152. Residues 209–210 (GE), Ser-241, 263–265 (SLH), and Asn-340 contribute to the S-adenosyl-L-methionine site. Catalysis depends on Cys-383, which acts as the S-methylcysteine intermediate.

It belongs to the radical SAM superfamily. RlmN family. [4Fe-4S] cluster is required as a cofactor.

The protein resides in the cytoplasm. It carries out the reaction adenosine(2503) in 23S rRNA + 2 reduced [2Fe-2S]-[ferredoxin] + 2 S-adenosyl-L-methionine = 2-methyladenosine(2503) in 23S rRNA + 5'-deoxyadenosine + L-methionine + 2 oxidized [2Fe-2S]-[ferredoxin] + S-adenosyl-L-homocysteine. The enzyme catalyses adenosine(37) in tRNA + 2 reduced [2Fe-2S]-[ferredoxin] + 2 S-adenosyl-L-methionine = 2-methyladenosine(37) in tRNA + 5'-deoxyadenosine + L-methionine + 2 oxidized [2Fe-2S]-[ferredoxin] + S-adenosyl-L-homocysteine. Functionally, specifically methylates position 2 of adenine 2503 in 23S rRNA and position 2 of adenine 37 in tRNAs. m2A2503 modification seems to play a crucial role in the proofreading step occurring at the peptidyl transferase center and thus would serve to optimize ribosomal fidelity. The chain is Dual-specificity RNA methyltransferase RlmN from Brucella abortus (strain S19).